The following is a 429-amino-acid chain: Type II methyltransferase M.AgeI (429 aa).

The SAM-dependent MTase C5-type domain maps to 1–429; sequence MKTIDLFCGA…MAETIKVAIS (429 aa). The active site involves cysteine 80.

The protein belongs to the class I-like SAM-binding methyltransferase superfamily. C5-methyltransferase family.

The enzyme catalyses a 2'-deoxycytidine in DNA + S-adenosyl-L-methionine = a 5-methyl-2'-deoxycytidine in DNA + S-adenosyl-L-homocysteine + H(+). A methylase, recognizes the double-stranded sequence 5'-ACCGGT-3', methylates C-3 on both strands, and protects the DNA from cleavage by the AgeI endonuclease. In Thalassovita gelatinovora (Thalassobius gelatinovorus), this protein is Type II methyltransferase M.AgeI (ageIM).